We begin with the raw amino-acid sequence, 118 residues long: Large ribosomal subunit protein bL19 (118 aa).

The protein belongs to the bacterial ribosomal protein bL19 family.

Its function is as follows. This protein is located at the 30S-50S ribosomal subunit interface and may play a role in the structure and function of the aminoacyl-tRNA binding site. In Helicobacter pylori (strain J99 / ATCC 700824) (Campylobacter pylori J99), this protein is Large ribosomal subunit protein bL19 (rplS).